The sequence spans 181 residues: ADP-ribosylation factor 1-like 2 (181 aa).

The N-myristoyl glycine moiety is linked to residue Gly-2. The segment at 3–16 (NVFGSLFKGLFGKR) is important for the stable binding to the membranes. GTP-binding positions include 24–32 (GLDAAGKTT), 126–129 (NKQD), and Ala-160.

The protein belongs to the small GTPase superfamily. Arf family. As to expression, expressed in hypodermis, intestine, spermatheca, uterus, gonadal sheath, vulva cells, pharynx muscle, body wall muscle, head neurons, ventral nerve cord.

It localises to the golgi apparatus membrane. It catalyses the reaction GTP + H2O = GDP + phosphate + H(+). With respect to regulation, alternates between an inactive GDP-bound form and an active GTP-bound form. Activated by a guanine nucleotide-exchange factor (GEF) and inactivated by GTPase-activating protein (GAP). Its function is as follows. Small GTPase involved in protein trafficking between different compartments. Modulates vesicle budding and uncoating within the Golgi complex. In its GTP-bound form, triggers the recruitment of coatomer proteins to the Golgi membrane. The hydrolysis of ARF1-bound GTP, which is mediated by ARFGAPs proteins, is required for dissociation of coat proteins from Golgi membranes and vesicles. Involved in endoplasmic reticulum dynamics during embryogenesis. Also required for adult germline function. Plays a role in cell shedding during embryogenesis probably by promoting the endocytosis of cell adhesion molecules. During neurogenesis, involved in cell autonomous Q.p neuroblast asymmetric divisions that generate one precursor cell and one apoptotic cell, probably by controlling endocytosis. Plays a role in maintaining mitochondrial morphology. The chain is ADP-ribosylation factor 1-like 2 from Caenorhabditis elegans.